Consider the following 260-residue polypeptide: Rhythmically expressed gene 2 protein (260 aa).

This is Rhythmically expressed gene 2 protein (Reg-2) from Drosophila melanogaster (Fruit fly).